The following is a 231-amino-acid chain: 7-cyano-7-deazaguanine synthase (231 aa).

Position 8 to 18 (8 to 18 (FSGGQDSTTCL)) interacts with ATP. Residues cysteine 188, cysteine 197, cysteine 200, and cysteine 203 each coordinate Zn(2+).

It belongs to the QueC family. The cofactor is Zn(2+).

It carries out the reaction 7-carboxy-7-deazaguanine + NH4(+) + ATP = 7-cyano-7-deazaguanine + ADP + phosphate + H2O + H(+). Its pathway is purine metabolism; 7-cyano-7-deazaguanine biosynthesis. Its function is as follows. Catalyzes the ATP-dependent conversion of 7-carboxy-7-deazaguanine (CDG) to 7-cyano-7-deazaguanine (preQ(0)). The polypeptide is 7-cyano-7-deazaguanine synthase (Shigella dysenteriae serotype 1 (strain Sd197)).